The primary structure comprises 154 residues: Superoxide dismutase [Cu-Zn] (154 aa).

The Cu cation site is built by His-47, His-49, and His-64. A disulfide bridge links Cys-58 with Cys-147. The Zn(2+) site is built by His-64, His-72, His-81, and Asp-84. His-121 serves as a coordination point for Cu cation. Substrate is bound at residue Arg-144.

It belongs to the Cu-Zn superoxide dismutase family. Homodimer. It depends on Cu cation as a cofactor. The cofactor is Zn(2+).

The protein localises to the cytoplasm. The enzyme catalyses 2 superoxide + 2 H(+) = H2O2 + O2. Functionally, destroys radicals which are normally produced within the cells and which are toxic to biological systems. The protein is Superoxide dismutase [Cu-Zn] (SOD1) of Eremothecium gossypii (strain ATCC 10895 / CBS 109.51 / FGSC 9923 / NRRL Y-1056) (Yeast).